Consider the following 819-residue polypeptide: DNA topoisomerase 4 subunit A (819 aa).

Residues 30–496 (LPDIRDGLKP…QIIEIDTASL (467 aa)) enclose the Topo IIA-type catalytic domain. Catalysis depends on Y118, which acts as the O-(5'-phospho-DNA)-tyrosine intermediate.

Belongs to the type II topoisomerase GyrA/ParC subunit family. ParC type 2 subfamily. Heterotetramer composed of ParC and ParE.

It localises to the cell membrane. It carries out the reaction ATP-dependent breakage, passage and rejoining of double-stranded DNA.. In terms of biological role, topoisomerase IV is essential for chromosome segregation. It relaxes supercoiled DNA. Performs the decatenation events required during the replication of a circular DNA molecule. This Streptococcus pyogenes serotype M18 (strain MGAS8232) protein is DNA topoisomerase 4 subunit A.